The chain runs to 101 residues: NADH-quinone oxidoreductase subunit K (101 aa).

The next 3 membrane-spanning stretches (helical) occupy residues 2–22 (TLSAYLALALILFCIGLYGAL), 28–48 (VIVLICIELMLNAVNINFVAF), and 62–82 (FALFAIAVAAAEAAVGLAALI).

It belongs to the complex I subunit 4L family. NDH-1 is composed of 14 different subunits. Subunits NuoA, H, J, K, L, M, N constitute the membrane sector of the complex.

It localises to the cell membrane. The enzyme catalyses a quinone + NADH + 5 H(+)(in) = a quinol + NAD(+) + 4 H(+)(out). Functionally, NDH-1 shuttles electrons from NADH, via FMN and iron-sulfur (Fe-S) centers, to quinones in the respiratory chain. The immediate electron acceptor for the enzyme in this species is believed to be a menaquinone. Couples the redox reaction to proton translocation (for every two electrons transferred, four hydrogen ions are translocated across the cytoplasmic membrane), and thus conserves the redox energy in a proton gradient. The protein is NADH-quinone oxidoreductase subunit K of Geobacillus kaustophilus (strain HTA426).